A 323-amino-acid polypeptide reads, in one-letter code: Iron-sulfur cluster transfer protein NUBPL (323 aa).

65 to 72 serves as a coordination point for ATP; it reads AKGGVGKS.

Belongs to the Mrp/NBP35 ATP-binding proteins family. [4Fe-4S] cluster is required as a cofactor.

The protein localises to the mitochondrion. Functionally, iron-sulfur cluster transfer protein involved in the assembly of the mitochondrial membrane respiratory chain NADH dehydrogenase (Complex I). May deliver one or more Fe-S clusters to complex I subunits. The polypeptide is Iron-sulfur cluster transfer protein NUBPL (nubpl) (Dictyostelium discoideum (Social amoeba)).